The following is a 449-amino-acid chain: uncharacterized protein (449 aa).

Positions 1 to 13 (MPKAPKTKLHHAP) are enriched in basic residues. The tract at residues 1 to 125 (MPKAPKTKLH…SQEEEEYEEL (125 aa)) is disordered. Ser-22 bears the Phosphoserine mark. Residues 73-84 (KPSQISAFISNG) show a composition bias toward polar residues. Ser-156 is subject to Phosphoserine.

This sequence belongs to the bystin family.

This is an uncharacterized protein from Schizosaccharomyces pombe (strain 972 / ATCC 24843) (Fission yeast).